The sequence spans 102 residues: Large ribosomal subunit protein bL21 (102 aa).

The protein belongs to the bacterial ribosomal protein bL21 family. In terms of assembly, part of the 50S ribosomal subunit. Contacts protein L20.

Functionally, this protein binds to 23S rRNA in the presence of protein L20. The sequence is that of Large ribosomal subunit protein bL21 from Nitratidesulfovibrio vulgaris (strain ATCC 29579 / DSM 644 / CCUG 34227 / NCIMB 8303 / VKM B-1760 / Hildenborough) (Desulfovibrio vulgaris).